The following is a 484-amino-acid chain: Cobyric acid synthase (484 aa).

The GATase cobBQ-type domain maps to 251–438 (ALKIAVPVLP…LHGLFGSDAY (188 aa)). The active-site Nucleophile is C333. Residue H430 is part of the active site.

It belongs to the CobB/CobQ family. CobQ subfamily.

It participates in cofactor biosynthesis; adenosylcobalamin biosynthesis. Its function is as follows. Catalyzes amidations at positions B, D, E, and G on adenosylcobyrinic A,C-diamide. NH(2) groups are provided by glutamine, and one molecule of ATP is hydrogenolyzed for each amidation. This chain is Cobyric acid synthase, found in Rhizobium leguminosarum bv. trifolii (strain WSM2304).